The chain runs to 984 residues: Shutoff protein (984 aa).

Residues 131–231 (GVAAESDPSD…DLERDALVAP (101 aa)) form a disordered region. Acidic residues predominate over residues 137–147 (DPSDDEPDPEP). Residues 148–159 (EYDHREADHDSD) are compositionally biased toward basic and acidic residues. Residues 176-186 (VDEEPQDDSPS) are compositionally biased toward acidic residues. A compositionally biased stretch (polar residues) spans 190-202 (TASTVIEEAQTSA). Residues 205 to 216 (DSHDDDTHRDDG) show a composition bias toward basic and acidic residues. Positions 411 to 476 (LMETLLQPFA…AVRYTATLEL (66 aa)) are binding to host EIF4G. The RRM domain occupies 479 to 597 (RVFREPSMVK…RLYSLPNPTA (119 aa)). 2 disordered regions span residues 810–853 (GVYK…GNRA) and 876–984 (KVGP…RQEE). At Tyr-812 the chain carries Phosphotyrosine; by host. Residues 913 to 923 (AGGRRFGRRNT) show a composition bias toward basic residues. Positions 945–958 (RGQQGEHPTTSPSA) are enriched in low complexity.

It belongs to the adenoviridae shutoff protein family. As to quaternary structure, monomer. Interacts with hexon protein; this interaction allows chaperoning and trimerization of hexon proteins. Interacts (via N-terminus) with host initiation factor EIF4G (via C-terminus). Interacts (via RRM domain) with viral mRNAs that contain the tripartite leader; this interaction allows ribosome shunting and expression of viral late mRNAs. Post-translationally, might be cleaved by the viral protease. In terms of processing, phosphorylated. Tyrosine phosphorylation enhances preferential binding to tripartite leader mRNAs and allows ribosome shunting. Methylated. Asymmetric dimethylation by host PRMT1 of the Arg/Gly-rich region may regulate shutoff protein binding to hexon and promote the capsid assembly in the nucleus.

The protein localises to the host cytoplasm. In terms of biological role, protein that inhibits host translation while promoting late viral translation by ribosome shunting. Blocks host cap-dependent translation by binding to eIF4G, displacing MKNK1 from cap initiation complexes and preventing EIF4E phosphorylation. Binds to the tripartite leader sequence of viral late mRNAs and recruits host eIF4G, PABPC1/poly-A binding protein and 40S ribosomes subunits on viral mRNAs, allowing ribosome shunting and efficient translation of late viral mRNAs even though conventional translation via ribosome scanning from the cap has been shut off in the host cell. During assembly, acts as a chaperone protein that helps hexon proteins assembly into trimers. This chain is Shutoff protein, found in Galliformes (FAdV-1).